The chain runs to 546 residues: Crossover junction endonuclease EME1A (546 aa).

2 disordered regions span residues 1-55 and 88-232; these read MSDF…FLDE and VISL…REKQ. The segment covering 28-49 has biased composition (polar residues); sequence PTDLNLDTEPSLQKQPPGSAST. Basic and acidic residues-rich tracts occupy residues 103–120 and 149–167; these read SSKK…KPCR and DAIE…VEKM. The segment covering 173 to 183 has biased composition (polar residues); it reads TITSKSTSLSA. Residues 188-245 are a coiled coil; sequence KKKMSKDEKTRAAEEKKLQKEQEKLQKAASKAEDAEHKKLEREKQKWAKEKDKALKCI. Basic and acidic residues predominate over residues 192-232; the sequence is SKDEKTRAAEEKKLQKEQEKLQKAASKAEDAEHKKLEREKQ. Positions 278–478 constitute an ERCC4 domain; it reads NPIQRSIVWT…PSLKSLLKVY (201 aa).

The protein belongs to the EME1/MMS4 family. In terms of assembly, forms a heterodimer with MUS81. Mg(2+) serves as cofactor. The cofactor is Ca(2+).

Its subcellular location is the nucleus. Functionally, interacts with MUS81 to form a DNA structure-specific endonuclease with substrate preference for branched DNA structures with a 5'-end at the branch nick. Typical substrates include 3'-flap structures, D-loops, replication forks, nicked Holliday junctions and also intact Holliday junctions with a reduced efficiency. May be required in mitosis for the processing of stalled or collapsed replication fork intermediates. Plays a role in DNA repair and in genotoxic stress-induced homologous recombination (HR) in somatic cells. Mediates a subset of meiotic recombination events that are insensitive to crossover interference. This Arabidopsis thaliana (Mouse-ear cress) protein is Crossover junction endonuclease EME1A (EME1A).